A 307-amino-acid polypeptide reads, in one-letter code: UPF0276 protein HI_1600 (307 aa).

This sequence belongs to the UPF0276 family.

This chain is UPF0276 protein HI_1600, found in Haemophilus influenzae (strain ATCC 51907 / DSM 11121 / KW20 / Rd).